Here is a 284-residue protein sequence, read N- to C-terminus: Tetraspanin-10 (284 aa).

Over M1–R11 the chain is Cytoplasmic. A helical membrane pass occupies residues W12–S32. Residues T33–T43 lie on the Extracellular side of the membrane. The helical transmembrane segment at F44 to A64 threads the bilayer. The Cytoplasmic portion of the chain corresponds to C65–Y75. A helical membrane pass occupies residues L76 to V96. At T97–E228 the chain is on the extracellular side. N-linked (GlcNAc...) asparagine glycosylation is found at N99, N128, and N183. Residues W229–S249 form a helical membrane-spanning segment. The Cytoplasmic segment spans residues T250–F284.

It belongs to the tetraspanin (TM4SF) family.

It localises to the membrane. Functionally, may be involved in the regulation of cell differentiation. The sequence is that of Tetraspanin-10 (TET10) from Arabidopsis thaliana (Mouse-ear cress).